Reading from the N-terminus, the 119-residue chain is Large ribosomal subunit protein bL20 (119 aa).

Belongs to the bacterial ribosomal protein bL20 family.

Functionally, binds directly to 23S ribosomal RNA and is necessary for the in vitro assembly process of the 50S ribosomal subunit. It is not involved in the protein synthesizing functions of that subunit. This is Large ribosomal subunit protein bL20 from Streptococcus gordonii (strain Challis / ATCC 35105 / BCRC 15272 / CH1 / DL1 / V288).